A 192-amino-acid chain; its full sequence is Vascular endothelial growth factor A (192 aa).

An N-terminal signal peptide occupies residues 1-26 (MNFLLSWIHWGLAALLYFHNAKVLQA). 3 disulfide bridges follow: C52/C94, C83/C128, and C87/C130. N-linked (GlcNAc...) asparagine glycosylation is present at N101.

The protein belongs to the PDGF/VEGF growth factor family. Homodimer; disulfide-linked. Also found as heterodimer with PGF Interacts with FLT1/VEGFR1 and KDR/VEGFR2 receptors, heparan sulfate and heparin. Expressed by the venom gland, and probably other tissues.

It is found in the secreted. In terms of biological role, growth factor active in angiogenesis, vasculogenesis and endothelial cell growth. Induces endothelial cell proliferation, promotes cell migration, inhibits apoptosis and induces permeabilization of blood vessels. The protein is Vascular endothelial growth factor A of Vipera ammodytes ammodytes (Western sand viper).